Consider the following 150-residue polypeptide: Large ribosomal subunit protein bL9 (150 aa).

This sequence belongs to the bacterial ribosomal protein bL9 family.

Functionally, binds to the 23S rRNA. The sequence is that of Large ribosomal subunit protein bL9 from Renibacterium salmoninarum (strain ATCC 33209 / DSM 20767 / JCM 11484 / NBRC 15589 / NCIMB 2235).